Reading from the N-terminus, the 206-residue chain is Synaptosomal-associated protein 25 (206 aa).

The span at 1-20 shows a compositional bias: basic and acidic residues; sequence MAEDADMRNELEEMQRRADQ. The tract at residues 1–23 is disordered; it reads MAEDADMRNELEEMQRRADQLAD. Positions 19–81 constitute a t-SNARE coiled-coil homology 1 domain; that stretch reads DQLADESLES…KEAEKNLTDL (63 aa). Residues cysteine 85, cysteine 88, cysteine 90, and cysteine 92 are each lipidated (S-palmitoyl cysteine). Position 138 is a phosphothreonine (threonine 138). The t-SNARE coiled-coil homology 2 domain occupies 140–202; it reads DARENEMDEN…DEANQRATKM (63 aa). Phosphoserine is present on serine 187.

Belongs to the SNAP-25 family. As to quaternary structure, part of the SNARE core complex containing SNAP25, VAMP2 and STX1A. This complex binds CPLX1. Interacts with TRIM9, RIMS1 and SNAPIN. Binds STXBP6. Found in a ternary complex with STX1A and VAMP8. Associates with the BLOC-1 complex. Isoform 1 and isoform 2 interact with BLOC1S6. Interacts with alpha-synuclein/SNCA. In terms of processing, palmitoylated. Cys-85 appears to be the main site, and palmitoylation is required for membrane association.

Its subcellular location is the membrane. The protein localises to the synapse. The protein resides in the synaptosome. It is found in the cell membrane. Functionally, t-SNARE involved in the molecular regulation of neurotransmitter release. May play an important role in the synaptic function of specific neuronal systems. Associates with proteins involved in vesicle docking and membrane fusion. The sequence is that of Synaptosomal-associated protein 25 (SNAP25) from Gallus gallus (Chicken).